Reading from the N-terminus, the 798-residue chain is Protocadherin beta-14 (798 aa).

The first 26 residues, 1–26 (MEIRGALDLRKRQVLIFLVLLGLSRA), serve as a signal peptide directing secretion. Over 27 to 686 (GTESAHYSVA…APAQAQADSL (660 aa)) the chain is Extracellular. Cadherin domains are found at residues 35–133 (VAEE…SPTF), 138–242 (ILIK…APEF), 247–347 (YEVQ…PPEV), 352–451 (ITKR…APAF), and 456–561 (YTLF…SPFV). C96 and C102 are disulfide-bonded. N169 is a glycosylation site (N-linked (GlcNAc...) asparagine). N-linked (GlcNAc...) asparagine glycosylation is found at N359, N418, and N436. N567 carries N-linked (GlcNAc...) asparagine glycosylation. Residues 568–671 (GSAPCTELVP…LVDGFSQPYL (104 aa)) enclose the Cadherin 6 domain. The helical transmembrane segment at 687 to 711 (TVYLVVALASVSSLFLFSVLLFVAV) threads the bilayer. Over 712 to 798 (RLCRRSRAAS…FRNSFGLNIQ (87 aa)) the chain is Cytoplasmic.

The protein localises to the cell membrane. Its function is as follows. Potential calcium-dependent cell-adhesion protein. May be involved in the establishment and maintenance of specific neuronal connections in the brain. The protein is Protocadherin beta-14 (PCDHB14) of Pan troglodytes (Chimpanzee).